The chain runs to 259 residues: Protein POLYCHOME (259 aa).

The segment at 236–259 is disordered; sequence KMKSTPSAKRAEREKRVRTLMSMR.

Interacts with APC/C activators such as APC5, FZR2, FZR3, CDC20.1 and CDC20.5. In terms of tissue distribution, expressed mainly in actively dividing cells (e.g. central cylinder of the root tip, young leaves and vascular tissues).

The protein localises to the nucleus. Its function is as follows. Negative regulator of the anaphase-promoting complex/cyclosome (APC/C) ubiquitin ligase required for proper mitotic progression and cell fate determination; inhibits premature cell differentiation. Prevents DNA endoreplication by promoting the maintenance of the mitotic state by preferentially inhibiting APC/C(FZR) and triggering cyclins accumulation (e.g. CYCB1-1, CYCB1-2 and CYCA2-3) in a temporal manner. Required for megagametophyte and endosperm development. Counteracts the activity of CCS52A1 thus inhibiting the turnover of CYCA2-3. Confers immunity to bacterial pathogens (e.g. Pseudomonas syringae pv. tomato DC3000), which is associated with increased expression of disease resistance (R) genes. In Arabidopsis thaliana (Mouse-ear cress), this protein is Protein POLYCHOME (PYM).